We begin with the raw amino-acid sequence, 362 residues long: Peptide chain release factor 1 (362 aa).

Q240 carries the post-translational modification N5-methylglutamine.

This sequence belongs to the prokaryotic/mitochondrial release factor family. In terms of processing, methylated by PrmC. Methylation increases the termination efficiency of RF1.

The protein resides in the cytoplasm. Its function is as follows. Peptide chain release factor 1 directs the termination of translation in response to the peptide chain termination codons UAG and UAA. In Bifidobacterium adolescentis (strain ATCC 15703 / DSM 20083 / NCTC 11814 / E194a), this protein is Peptide chain release factor 1.